The chain runs to 222 residues: UPF0173 metal-dependent hydrolase Mboo_0816 (222 aa).

The protein belongs to the UPF0173 family.

This is UPF0173 metal-dependent hydrolase Mboo_0816 from Methanoregula boonei (strain DSM 21154 / JCM 14090 / 6A8).